The sequence spans 762 residues: Endothelin-converting enzyme 1 (762 aa).

The Cytoplasmic segment spans residues 1–60 (MGSLRPPQGLGLQWSSFFLGKKGPGLTVSLPLLASSLQVNFRSPRSGQRCWAARTSVEKR). Residues 61-81 (LVVLVTLLAAGLVACLAALGI) form a helical; Signal-anchor for type II membrane protein membrane-spanning segment. Topologically, residues 82–762 (QYRTRTPPVC…MNPRHKCEVW (681 aa)) are extracellular. A Peptidase M13 domain is found at 90-762 (VCLTEACVSV…MNPRHKCEVW (673 aa)). 5 disulfides stabilise this stretch: C91-C96, C114-C747, C122-C707, C177-C427, and C636-C759. N158, N179, N202, N262, N308, N354, N375, and N531 each carry an N-linked (GlcNAc...) asparagine glycan. Position 599 (H599) interacts with Zn(2+). Residue E600 is part of the active site. H603 is a Zn(2+) binding site. N624 and N643 each carry an N-linked (GlcNAc...) asparagine glycan. A Zn(2+)-binding site is contributed by E659. Residue D663 is the Proton donor of the active site.

The protein belongs to the peptidase M13 family. In terms of assembly, homodimer; disulfide-linked. Interacts with PPP1R16B. Interacts with TSPAN8; this interaction recruits the endothelin converting enzyme ECE1 to tetraspanin-enriched microdomains and positively modulates its enzymatic activity. The cofactor is Zn(2+). In terms of tissue distribution, all isoforms are expressed in aortic endothelial cells. Isoform A is also expressed in liver; isoform B in smooth muscle cells and fibroblasts; isoform C in aortic endothelial cells, smooth muscle cells, fibroblasts, liver and lung, and isoform D in smooth muscle cells.

It localises to the cell membrane. The catalysed reaction is Hydrolysis of the 21-Trp-|-Val-22 bond in big endothelin to form endothelin 1.. With respect to regulation, inhibited by phosphoramidon. In terms of biological role, converts big endothelin-1 to endothelin-1. The protein is Endothelin-converting enzyme 1 (Ece1) of Rattus norvegicus (Rat).